The chain runs to 344 residues: MMSTDQHIQQNMNDNSNNSNNSNNNNTNNNNNNQSVNVNVNNTNNNTQTISNLSAGLKSVSLTDQQQNEVNLNLLQQQLHQEASTQQQQSRITQFFQNQPTEGFTLFSHRSAPNGFKVAIILSELNLPFNTFFLDFNNGEQRTPEFVTINPNARVPALIDHYNDNTSIWESGAITLYLVSKYLKENGECSLWSNNLIEQSQISSWLFFQTSGHAPMIGQALHFRYFHSCPVPSAVERYTDEVRRVYGVIEMALAERREALIMDLDVENAAAYSAGTTPLSQSRFFDHPVWLVGDRTTVADLSFVPWNNVVDRIGINLKVEFPEVYKWTKHMMQRPAVKRALRGD.

Residues Met1–Thr49 form a disordered region. Residues Gln9–Thr49 show a composition bias toward low complexity. Positions Glu102–Asn186 constitute a GST N-terminal domain. Residues Asn195–Asp344 form the GST C-terminal domain.

This sequence belongs to the GST superfamily. Homodimer.

Plays an important role in the cellular response to the nitrogen source. URE2 gene plays a major part in the repression of GLN1 and GDH2 genes by glutamine, and is required for the inactivation of glutamine synthetase. URE2 gene product may catalytically inactivate GLN3 in response to an increase in the intracellular concentration of glutamine. The protein is Protein URE2 (URE2) of Candida albicans (strain SC5314 / ATCC MYA-2876) (Yeast).